The primary structure comprises 316 residues: Ribosomal RNA small subunit methyltransferase H (316 aa).

S-adenosyl-L-methionine is bound by residues 35 to 37, D55, F84, D105, and Q112; that span reads SGH.

Belongs to the methyltransferase superfamily. RsmH family.

The protein resides in the cytoplasm. It carries out the reaction cytidine(1402) in 16S rRNA + S-adenosyl-L-methionine = N(4)-methylcytidine(1402) in 16S rRNA + S-adenosyl-L-homocysteine + H(+). Its function is as follows. Specifically methylates the N4 position of cytidine in position 1402 (C1402) of 16S rRNA. The sequence is that of Ribosomal RNA small subunit methyltransferase H from Streptococcus dysgalactiae subsp. equisimilis (strain GGS_124).